Reading from the N-terminus, the 296-residue chain is NADH-cytochrome b5 reductase 2 (296 aa).

Residues 12–29 (LPIALGVGAASIATAIIL) traverse the membrane as a helical segment. The FAD-binding FR-type domain occupies 47–151 (NEWIDLPIIK…KGPITKWEWK (105 aa)). Residue 154–189 (SYDSITLLGAGTGINPLYQLVHHIAENPEDNTKIHL) participates in FAD binding.

It belongs to the flavoprotein pyridine nucleotide cytochrome reductase family. FAD is required as a cofactor.

It localises to the mitochondrion outer membrane. It carries out the reaction 2 Fe(III)-[cytochrome b5] + NADH = 2 Fe(II)-[cytochrome b5] + NAD(+) + H(+). Its function is as follows. May mediate the reduction of outer membrane cytochrome b5. The chain is NADH-cytochrome b5 reductase 2 (MCR1) from Kluyveromyces lactis (strain ATCC 8585 / CBS 2359 / DSM 70799 / NBRC 1267 / NRRL Y-1140 / WM37) (Yeast).